The sequence spans 415 residues: Gamma-glutamyl phosphate reductase (415 aa).

Belongs to the gamma-glutamyl phosphate reductase family.

It localises to the cytoplasm. It carries out the reaction L-glutamate 5-semialdehyde + phosphate + NADP(+) = L-glutamyl 5-phosphate + NADPH + H(+). Its pathway is amino-acid biosynthesis; L-proline biosynthesis; L-glutamate 5-semialdehyde from L-glutamate: step 2/2. In terms of biological role, catalyzes the NADPH-dependent reduction of L-glutamate 5-phosphate into L-glutamate 5-semialdehyde and phosphate. The product spontaneously undergoes cyclization to form 1-pyrroline-5-carboxylate. The sequence is that of Gamma-glutamyl phosphate reductase from Bacillus cereus (strain ATCC 10987 / NRS 248).